We begin with the raw amino-acid sequence, 343 residues long: Dihydroorotase (343 aa).

Residues His-14 and His-16 each coordinate Zn(2+). Residues 16-18 (HLR) and Asn-42 each bind substrate. Zn(2+) is bound by residues Lys-99, His-136, and His-174. Lys-99 is modified (N6-carboxylysine). His-136 provides a ligand contact to substrate. Residue Leu-219 coordinates substrate. Asp-247 provides a ligand contact to Zn(2+). Asp-247 is a catalytic residue. Residues His-251 and Ala-263 each coordinate substrate.

It belongs to the metallo-dependent hydrolases superfamily. DHOase family. Class II DHOase subfamily. Homodimer. Zn(2+) serves as cofactor.

The enzyme catalyses (S)-dihydroorotate + H2O = N-carbamoyl-L-aspartate + H(+). The protein operates within pyrimidine metabolism; UMP biosynthesis via de novo pathway; (S)-dihydroorotate from bicarbonate: step 3/3. Its function is as follows. Catalyzes the reversible cyclization of carbamoyl aspartate to dihydroorotate. The chain is Dihydroorotase from Psychromonas ingrahamii (strain DSM 17664 / CCUG 51855 / 37).